A 29-amino-acid chain; its full sequence is uncharacterized protein (29 aa).

This is an uncharacterized protein from Haloarcula hispanica (His1V).